Consider the following 1482-residue polypeptide: Cystic fibrosis transmembrane conductance regulator (1482 aa).

At 1–77 (MQRSPLEKAS…KLINALRRCF (77 aa)) the chain is on the cytoplasmic side. A helical transmembrane segment spans residues 78–98 (FWRFMFYGIILYLGEVTKAVQ). Positions 81–365 (FMFYGIILYL…WAVQTWYDSL (285 aa)) constitute an ABC transmembrane type-1 1 domain. Residues 99 to 122 (PLLLGRIIASYDPDNKAERSIAIY) are Extracellular-facing. The helical transmembrane segment at 123 to 146 (LGVGLCLLFIVRTLLLHPAIFGPH) threads the bilayer. Residues 147–195 (HIGMQMRIAMFSLIYKKTLKLSSRVLDKISIGQLVSLLSNNLNKFDEGL) are Cytoplasmic-facing. A helical membrane pass occupies residues 196 to 216 (ALAHFVWIAPLQVTLLMGLLW). At 217–222 (ELLQAS) the chain is on the extracellular side. A helical membrane pass occupies residues 223–243 (AFCGLAFLVVLALFQAGLGKM). At 244 to 298 (MMKYRDQRAGKINERLVITSEMIENIQSVKAYCWEEAMEKMIENLRQTELKLTRK) the chain is on the cytoplasmic side. Residues 299–319 (AAYVRYFNSSAFFFSGLFVVF) traverse the membrane as a helical segment. Topologically, residues 320–339 (LSVLPYALLKGIMLRKIFTT) are extracellular. The helical transmembrane segment at 340–358 (ISFCIVLRMAVTRQFPWAV) threads the bilayer. The Cytoplasmic portion of the chain corresponds to 359 to 859 (QTWYDSLGAI…YLRYVTVHKS (501 aa)). Residues Trp-401, Ser-434, 458 to 465 (GSTGAGKT), and Gln-493 each bind ATP. The 224-residue stretch at 423-646 (NGDNSLFFSN…RPDFSSKLMG (224 aa)) folds into the ABC transporter 1 domain. Cys-524 carries the S-palmitoyl cysteine lipid modification. Residues Ser-549 and Ser-660 each carry the phosphoserine modification. The interval 654-832 (TAERRNSIIT…EEINEEDLRE (179 aa)) is disordered R region. Ser-670 carries the phosphoserine; by PKA modification. At Ser-686 the chain carries Phosphoserine. Lys-688 is covalently cross-linked (Glycyl lysine isopeptide (Lys-Gly) (interchain with G-Cter in ubiquitin)). A phosphoserine mark is found at Ser-700 and Ser-712. A Phosphothreonine modification is found at Thr-717. Ser-737, Ser-768, Ser-791, Ser-796, and Ser-814 each carry phosphoserine. Residues 860 to 880 (LIFVLIWCLVVFLAEVAACLV) traverse the membrane as a helical segment. Positions 860–1156 (LIFVLIWCLV…AVNSSIDVDS (297 aa)) constitute an ABC transmembrane type-1 2 domain. The Extracellular segment spans residues 881 to 919 (VLCLLKKTSPQDKGNSTKGANNSYAVIITSTSAYYVFYI). 2 N-linked (GlcNAc...) asparagine glycosylation sites follow: Asn-895 and Asn-901. Residues 920–940 (YVGVADGLLALGLFRGLPLVH) form a discontinuously helical membrane-spanning segment. At 941–991 (TLITVSKILHRKMLHSVLQAPMSTLNTLKAGGILNRFSKDIAVLDDLLPLT) the chain is on the cytoplasmic side. A helical membrane pass occupies residues 992–1012 (IFDFIQLLLIVIGAVAVVSVL). Residues 1013–1014 (KP) lie on the Extracellular side of the membrane. The helical transmembrane segment at 1015–1035 (YIFLATVPVIVAFILLRAYFL) threads the bilayer. Residues 1036–1096 (HTSQQLKQLE…TANWFLYLST (61 aa)) lie on the Cytoplasmic side of the membrane. Residues 1097–1117 (LRWFQMRIEMIFVIFFIAVTF) traverse the membrane as a helical segment. The Extracellular segment spans residues 1118–1131 (ISILTTGEGEGTVG). The helical transmembrane segment at 1132–1152 (IILTLAMNIMSTLQWAVNSSI) threads the bilayer. Topologically, residues 1153–1482 (DVDSLMRSVS…TEEEVQETRL (330 aa)) are cytoplasmic. The ABC transporter 2 domain occupies 1212-1445 (MTVKDLTAKY…KSLFRQAISP (234 aa)). ATP-binding positions include Tyr-1221 and 1246 to 1253 (GRTGSGKS). The segment at 1388–1482 (RTLKQAFADC…TEEEVQETRL (95 aa)) is interaction with GORASP2. Residue Cys-1397 is the site of S-palmitoyl cysteine attachment. A compositionally biased stretch (basic residues) spans 1454–1464 (HRNSSKQRSRS). Positions 1454–1482 (HRNSSKQRSRSKIAALKEETEEEVQETRL) are disordered. A Phosphoserine modification is found at Ser-1458. Residues 1472–1482 (ETEEEVQETRL) are compositionally biased toward acidic residues. Positions 1480-1482 (TRL) match the PDZ-binding motif.

Belongs to the ABC transporter superfamily. ABCC family. CFTR transporter (TC 3.A.1.202) subfamily. Monomer; does not require oligomerization for channel activity. May form oligomers in the membrane. Interacts with SLC26A3, SLC26A6 and NHERF1. Interacts with SHANK2. Interacts with MYO6. Interacts (via C-terminus) with GOPC (via PDZ domain); this promotes CFTR internalization and thereby decreases channel activity. Interacts with SLC4A7 through NHERF1. Found in a complex with MYO5B and RAB11A. Interacts with ANO1. Interacts with SLC26A8. Interacts with AHCYL1; the interaction increases CFTR activity. Interacts with CSE1L. The core-glycosylated form interacts with GORASP2 (via PDZ GRASP-type 1 domain) in respone to ER stress. Interacts with MARCHF2; the interaction leads to CFTR ubiqtuitination and degradation. Interacts with ADGRG2. In terms of processing, N-glycosylated. Phosphorylated; cAMP treatment promotes phosphorylation and activates the channel. Dephosphorylation decreases the ATPase activity (in vitro). Phosphorylation at PKA sites activates the channel. Phosphorylation at PKC sites enhances the response to phosphorylation by PKA. Phosphorylated by AMPK; this inhibits channel activity. Post-translationally, ubiquitinated, leading to its degradation in the lysosome. Deubiquitination by USP10 in early endosomes enhances its endocytic recycling to the cell membrane. Ubiquitinated by RNF185 during ER stress. Ubiquitinated by MARCHF2.

It is found in the apical cell membrane. The protein resides in the early endosome membrane. It localises to the cell membrane. Its subcellular location is the recycling endosome membrane. The protein localises to the endoplasmic reticulum membrane. It is found in the nucleus. It catalyses the reaction ATP + H2O + closed Cl(-) channel = ADP + phosphate + open Cl(-) channel.. The enzyme catalyses chloride(in) = chloride(out). It carries out the reaction hydrogencarbonate(in) = hydrogencarbonate(out). The catalysed reaction is ATP + H2O = ADP + phosphate + H(+). Functionally, epithelial ion channel that plays an important role in the regulation of epithelial ion and water transport and fluid homeostasis. Mediates the transport of chloride ions across the cell membrane. Possesses an intrinsic ATPase activity and utilizes ATP to gate its channel; the passive flow of anions through the channel is gated by cycles of ATP binding and hydrolysis by the ATP-binding domains. The ion channel is also permeable to HCO(3)(-); selectivity depends on the extracellular chloride concentration. Exerts its function also by modulating the activity of other ion channels and transporters. Contributes to the regulation of the pH and the ion content of the epithelial fluid layer. Modulates the activity of the epithelial sodium channel (ENaC) complex, in part by regulating the cell surface expression of the ENaC complex. May regulate bicarbonate secretion and salvage in epithelial cells by regulating the transporter SLC4A7. Can inhibit the chloride channel activity of ANO1. Plays a role in the chloride and bicarbonate homeostasis during sperm epididymal maturation and capacitation. The protein is Cystic fibrosis transmembrane conductance regulator of Sus scrofa (Pig).